We begin with the raw amino-acid sequence, 765 residues long: Protein transport protein sec23-2 (765 aa).

Zn(2+) is bound by residues cysteine 56, cysteine 60, cysteine 79, and cysteine 82. Phosphoserine is present on residues serine 565 and serine 566.

Belongs to the SEC23/SEC24 family. SEC23 subfamily. The COPII coat is composed of at least 5 proteins: the sec23/24 complex, the sec13/31 complex, and the protein sar1.

Its subcellular location is the cytoplasm. It is found in the cytoplasmic vesicle. It localises to the COPII-coated vesicle membrane. The protein localises to the endoplasmic reticulum membrane. The protein resides in the golgi apparatus membrane. Functionally, component of the coat protein complex II (COPII) which promotes the formation of transport vesicles from the endoplasmic reticulum (ER). The coat has two main functions, the physical deformation of the endoplasmic reticulum membrane into vesicles and the selection of cargo molecules. The protein is Protein transport protein sec23-2 (sec232) of Schizosaccharomyces pombe (strain 972 / ATCC 24843) (Fission yeast).